A 115-amino-acid chain; its full sequence is MTTSFYFLLVALGLLLYVCQSSFGNQHTRNSDTPWNRCGSQITDSYRELCPHKRNDAGKKRGQASPLWQRGGSLSMLKARAKRNEAFHLQRAHRGVVEHCCKRACSNAEFMQFCG.

A signal peptide spans 1-21; it reads MTTSFYFLLVALGLLLYVCQS. Positions 22 to 29 are excised as a propeptide; sequence SFGNQHTR. 3 disulfide bridges follow: C38-C101, C50-C114, and C100-C105. A 4-carboxyglutamate modification is found at E48. The propeptide at 53–94 is c peptide; the sequence is KRNDAGKKRGQASPLWQRGGSLSMLKARAKRNEAFHLQRAHR. Position 98 is a 4-carboxyglutamate (E98). A 4-carboxyglutamate modification is found at E109. C114 carries the post-translational modification Cysteine amide.

The protein belongs to the insulin family. As to quaternary structure, heterodimer of A and B chains; disulfide-linked. As to expression, expressed by the venom gland.

The protein localises to the secreted. This venom insulin facilitates prey capture by rapidly inducing hypoglycemic shock. It is one of the smallest known insulin found in nature and lacks the C-terminal segment of the B chain that, in human insulin, mediates engagement of the insulin receptor (INSR) and assembly of the hormone's hexameric storage form. Despite lacking this segment, it both binds and activates human insulin receptor (long isoform (HIR-B)) with a high potency (EC(50)=15.5 nM). In vivo, intraperitoneal injection of this peptide into zebrafish lowers blood glucose with a lower potency than human insulin. In addition, when applied to water, this peptide reduces overall locomotor activity of zebrafish larvae, observed as a significant decrease in the percentage of time spent swimming and movement frequency. When tested on a mouse model of diabetes, this insulin also lowers blood glucose with a 10-fold lower potency than human insulin. The protein is Con-Ins T2 of Conus tulipa (Fish-hunting cone snail).